We begin with the raw amino-acid sequence, 668 residues long: tRNA 5-methylaminomethyl-2-thiouridine biosynthesis bifunctional protein MnmC (668 aa).

The segment at 1–245 (MKHYAIQPAN…KREMLCGVME (245 aa)) is tRNA (mnm(5)s(2)U34)-methyltransferase. Positions 270-668 (IGGGIASALL…LLKGKAVKAG (399 aa)) are FAD-dependent cmnm(5)s(2)U34 oxidoreductase.

In the N-terminal section; belongs to the methyltransferase superfamily. tRNA (mnm(5)s(2)U34)-methyltransferase family. The protein in the C-terminal section; belongs to the DAO family. FAD serves as cofactor.

The protein resides in the cytoplasm. It catalyses the reaction 5-aminomethyl-2-thiouridine(34) in tRNA + S-adenosyl-L-methionine = 5-methylaminomethyl-2-thiouridine(34) in tRNA + S-adenosyl-L-homocysteine + H(+). Its function is as follows. Catalyzes the last two steps in the biosynthesis of 5-methylaminomethyl-2-thiouridine (mnm(5)s(2)U) at the wobble position (U34) in tRNA. Catalyzes the FAD-dependent demodification of cmnm(5)s(2)U34 to nm(5)s(2)U34, followed by the transfer of a methyl group from S-adenosyl-L-methionine to nm(5)s(2)U34, to form mnm(5)s(2)U34. This Escherichia coli (strain SMS-3-5 / SECEC) protein is tRNA 5-methylaminomethyl-2-thiouridine biosynthesis bifunctional protein MnmC.